The sequence spans 37 residues: Large ribosomal subunit protein bL36 (37 aa).

It belongs to the bacterial ribosomal protein bL36 family.

In Treponema denticola (strain ATCC 35405 / DSM 14222 / CIP 103919 / JCM 8153 / KCTC 15104), this protein is Large ribosomal subunit protein bL36.